Reading from the N-terminus, the 156-residue chain is Snaclec A5 (156 aa).

Positions 1–23 (MGRSISVSFGLLVVFLSLSGTGA) are cleaved as a signal peptide. 3 disulfides stabilise this stretch: Cys27/Cys38, Cys55/Cys154, and Cys129/Cys146. The C-type lectin domain maps to 34–155 (HEGHCYKVFN…CGKPYRFTCE (122 aa)).

The protein belongs to the snaclec family. In terms of assembly, heterodimer; disulfide-linked. As to expression, expressed by the venom gland.

It localises to the secreted. Its function is as follows. Interferes with one step of hemostasis (modulation of platelet aggregation, or coagulation cascade, for example). In Macrovipera lebetinus (Levantine viper), this protein is Snaclec A5.